The following is a 145-amino-acid chain: Pleckstrin homology domain-containing protein 1 (145 aa).

The PH domain occupies 26-127 (NPERSGWLTK…WINSIGRSIV (102 aa)). Residues 29 to 53 (RSGWLTKQGDYIKTWRRRWFVLKRG) form a binds specifically PtdIns3P region.

Binds PtdIns3P. In terms of tissue distribution, ubiquitously expressed.

Its subcellular location is the cytoplasm. Binds specifically to phosphatidylinositol 3-phosphate (PtdIns3P), but not to other phosphoinositides. The sequence is that of Pleckstrin homology domain-containing protein 1 (PH1) from Arabidopsis thaliana (Mouse-ear cress).